The sequence spans 179 residues: Apolipophorin-3b (179 aa).

The N-terminal stretch at 1–16 (MNTLLAVLMLAVAAQA) is a signal peptide. 12 repeats span residues 30–40 (VQQLNHTIVNA), 41–52 (AHELHETLGLPT), 53–60 (PDEALNLL), 61–78 (TEQA…TTSL), 79–89 (KQEAEKHQGSV), 90–99 (AEQLNRFARN), 100–113 (LNNS…SAQP), 114–127 (ADQL…LTNV), 128–140 (GHQW…RPSV), 141–151 (AQEAWAPVQSA), 152–165 (LQEA…AAAN), and 166–179 (LQNS…KPAN). N-linked (GlcNAc...) asparagine glycosylation is present at Asn34. Asn101 carries N-linked (GlcNAc...) asparagine glycosylation. The interval 152–179 (LQEAAEKTKEAAANLQNSIQSAVQKPAN) is disordered. Over residues 165-179 (NLQNSIQSAVQKPAN) the composition is skewed to polar residues.

This sequence belongs to the insect apolipophorin-3 family. As to quaternary structure, equilibrium between a soluble monomer and a bound lipoprotein form. Apolipophorin-3 associates with lipophorin during lipid loading until each particle contains 14 molecules of apolipophorin-3 in L.migratoria (5 molecules of apolipophorin-3a and 9 of apolipophorin-3b). As to expression, hemolymph.

The protein resides in the secreted. Functionally, assists in the loading of diacylglycerol, generated from triacylglycerol stores in the fat body through the action of adipokinetic hormone, into lipophorin, the hemolymph lipoprotein. It increases the lipid carrying capacity of lipophorin by covering the expanding hydrophobic surface resulting from diacylglycerol uptake. It thus plays a critical role in the transport of lipids during flight in several species of insects. The protein is Apolipophorin-3b of Locusta migratoria (Migratory locust).